Consider the following 439-residue polypeptide: 23S rRNA (uracil(1939)-C(5))-methyltransferase RlmD (439 aa).

In terms of domain architecture, TRAM spans 5 to 63 (RKLEHKTYKLNIESFSHEGRGIAHFEDKIIFVSDALPGELVIANRTFSCAKFEEADAKE). [4Fe-4S] cluster is bound by residues Cys-76, Cys-82, Cys-85, and Cys-164. S-adenosyl-L-methionine-binding residues include Gln-271, Phe-300, Asn-305, Glu-321, Asp-348, and Asp-370. Cys-396 functions as the Nucleophile in the catalytic mechanism.

It belongs to the class I-like SAM-binding methyltransferase superfamily. RNA M5U methyltransferase family. RlmD subfamily.

The catalysed reaction is uridine(1939) in 23S rRNA + S-adenosyl-L-methionine = 5-methyluridine(1939) in 23S rRNA + S-adenosyl-L-homocysteine + H(+). Catalyzes the formation of 5-methyl-uridine at position 1939 (m5U1939) in 23S rRNA. The protein is 23S rRNA (uracil(1939)-C(5))-methyltransferase RlmD of Vesicomyosocius okutanii subsp. Calyptogena okutanii (strain HA).